A 318-amino-acid chain; its full sequence is Transaldolase (318 aa).

K132 functions as the Schiff-base intermediate with substrate in the catalytic mechanism.

The protein belongs to the transaldolase family. Type 1 subfamily. As to quaternary structure, homodimer.

The protein localises to the cytoplasm. The enzyme catalyses D-sedoheptulose 7-phosphate + D-glyceraldehyde 3-phosphate = D-erythrose 4-phosphate + beta-D-fructose 6-phosphate. It functions in the pathway carbohydrate degradation; pentose phosphate pathway; D-glyceraldehyde 3-phosphate and beta-D-fructose 6-phosphate from D-ribose 5-phosphate and D-xylulose 5-phosphate (non-oxidative stage): step 2/3. In terms of biological role, transaldolase is important for the balance of metabolites in the pentose-phosphate pathway. This is Transaldolase from Shewanella baltica (strain OS185).